The sequence spans 104 residues: L-rhamnose mutarotase (104 aa).

Substrate is bound at residue Y18. H22 functions as the Proton donor in the catalytic mechanism. Residues Y41 and 76 to 77 contribute to the substrate site; that span reads WW.

It belongs to the rhamnose mutarotase family. Homodimer.

It is found in the cytoplasm. The enzyme catalyses alpha-L-rhamnose = beta-L-rhamnose. The protein operates within carbohydrate metabolism; L-rhamnose metabolism. Functionally, involved in the anomeric conversion of L-rhamnose. This chain is L-rhamnose mutarotase, found in Bacteroides thetaiotaomicron (strain ATCC 29148 / DSM 2079 / JCM 5827 / CCUG 10774 / NCTC 10582 / VPI-5482 / E50).